The following is a 253-amino-acid chain: Triosephosphate isomerase (253 aa).

9 to 11 (NWK) is a binding site for substrate. The active-site Electrophile is His96. Glu169 functions as the Proton acceptor in the catalytic mechanism. Substrate-binding positions include Gly175, Ser215, and 236 to 237 (GG).

Belongs to the triosephosphate isomerase family. As to quaternary structure, homodimer.

It localises to the cytoplasm. The catalysed reaction is D-glyceraldehyde 3-phosphate = dihydroxyacetone phosphate. It functions in the pathway carbohydrate biosynthesis; gluconeogenesis. The protein operates within carbohydrate degradation; glycolysis; D-glyceraldehyde 3-phosphate from glycerone phosphate: step 1/1. Involved in the gluconeogenesis. Catalyzes stereospecifically the conversion of dihydroxyacetone phosphate (DHAP) to D-glyceraldehyde-3-phosphate (G3P). The polypeptide is Triosephosphate isomerase (Borrelia garinii subsp. bavariensis (strain ATCC BAA-2496 / DSM 23469 / PBi) (Borreliella bavariensis)).